The chain runs to 333 residues: Glyceraldehyde-3-phosphate dehydrogenase (333 aa).

Residues 11–12 (RI), aspartate 32, and arginine 77 contribute to the NAD(+) site. Residues 148–150 (SCT), threonine 179, 208–209 (TG), and arginine 231 each bind D-glyceraldehyde 3-phosphate. The active-site Nucleophile is the cysteine 149. Position 313 (asparagine 313) interacts with NAD(+).

The protein belongs to the glyceraldehyde-3-phosphate dehydrogenase family. Homotetramer.

It localises to the cytoplasm. It carries out the reaction D-glyceraldehyde 3-phosphate + phosphate + NAD(+) = (2R)-3-phospho-glyceroyl phosphate + NADH + H(+). The protein operates within carbohydrate degradation; glycolysis; pyruvate from D-glyceraldehyde 3-phosphate: step 1/5. This is Glyceraldehyde-3-phosphate dehydrogenase (Gapdh) from Glossina morsitans morsitans (Savannah tsetse fly).